Consider the following 658-residue polypeptide: Gametogenetin (658 aa).

Disordered regions lie at residues 1–268 and 285–584; these read MGNV…ASGG and KQGP…SNKG. Residues 14–30 are compositionally biased toward basic and acidic residues; sequence SRKEQASDRASDSRRTP. The segment covering 54 to 83 has biased composition (low complexity); the sequence is PGSSGPPGLLIPPESQASSSTLPLTLELPS. The tract at residues 127–491 is interaction with GGNBP1; the sequence is RGLLEASHRG…APTPPSTLSP (365 aa). Over residues 163–188 the composition is skewed to pro residues; that stretch reads PAPPPTPLEPRKQLPPAPSTCDPQPP. The span at 194-204 shows a compositional bias: polar residues; it reads LASSATSPTES. Positions 252–264 are enriched in low complexity; that stretch reads SSSGPLAAKASLG. A Phosphoserine modification is found at serine 384. The span at 398 to 409 shows a compositional bias: low complexity; the sequence is PRRPTPALLAPP. Residues 423–460 are compositionally biased toward pro residues; the sequence is RPVPPSPQQIPPLPPPPPTPPATPPPAPPPTPQPPALP. Residues 489 to 516 are compositionally biased toward low complexity; sequence LSPTAAAEQAPAPTPAPVTSQVPATTTA. Residues 496-658 form an interactions with ZNF403/GGNBP2 and OAZ3 region; it reads EQAPAPTPAP…HYDLQATHST (163 aa). Basic residues predominate over residues 527 to 536; that stretch reads IRTRRNKGPR.

In terms of assembly, interacts with FANCL, GGNBP1 and ZNF403/GGNBP2.

May be involved in spermatogenesis. The chain is Gametogenetin (Ggn) from Rattus norvegicus (Rat).